The primary structure comprises 423 residues: Transmembrane protein 130 (423 aa).

A signal peptide spans 1–24; that stretch reads MAQAVWSRLGRILWLSCLLPWAPA. Topologically, residues 25–339 are extracellular; sequence GVAAGLYELN…IQVWPSRIQP (315 aa). N-linked (GlcNAc...) asparagine glycosylation is found at N34, N197, and N300. A PKD domain is found at 147–233; that stretch reads WPSSYLTKTI…AVMQKTGDFS (87 aa). A helical membrane pass occupies residues 340-360; the sequence is AVFAFPCATLITVMLAFIMYM. Over 361-423 the chain is Cytoplasmic; the sequence is TLRNATQQKD…LYKSVKTYTV (63 aa).

It is found in the golgi apparatus membrane. This Pongo abelii (Sumatran orangutan) protein is Transmembrane protein 130 (TMEM130).